Here is a 386-residue protein sequence, read N- to C-terminus: 2-deoxy-scyllo-inosose synthase (386 aa).

NAD(+)-binding positions include aspartate 42, 73-76 (EVHK), 105-109 (GITGN), 129-130 (TT), 140-142 (SLK), and 151-152 (KN). The active site involves lysine 142. Residue glutamate 184 participates in Co(2+) binding. The active site involves glutamate 244. Residues histidine 247 and histidine 263 each contribute to the Co(2+) site.

The protein belongs to the sugar phosphate cyclases superfamily. DOI synthase family. Requires NAD(+) as cofactor. It depends on Co(2+) as a cofactor.

The catalysed reaction is D-glucose 6-phosphate = 2-deoxy-L-scyllo-inosose + phosphate. It participates in metabolic intermediate biosynthesis; 2-deoxystreptamine biosynthesis; 2-deoxystreptamine from D-glucose 6-phosphate: step 1/4. It functions in the pathway antibiotic biosynthesis; paromomycin biosynthesis. Functionally, catalyzes the intramolecular carbocycle formation from D-glucose-6-phosphate to 2-deoxy-scyllo-inosose (DOI). In Streptomyces paromomycinus (Streptomyces rimosus subsp. paromomycinus), this protein is 2-deoxy-scyllo-inosose synthase (parC).